A 123-amino-acid chain; its full sequence is Large ribosomal subunit protein uL14 (123 aa).

It belongs to the universal ribosomal protein uL14 family. As to quaternary structure, part of the 50S ribosomal subunit. Forms a cluster with proteins L3 and L19. In the 70S ribosome, L14 and L19 interact and together make contacts with the 16S rRNA in bridges B5 and B8.

Binds to 23S rRNA. Forms part of two intersubunit bridges in the 70S ribosome. This chain is Large ribosomal subunit protein uL14, found in Corynebacterium urealyticum (strain ATCC 43042 / DSM 7109).